Reading from the N-terminus, the 496-residue chain is Glutamyl-tRNA(Gln) amidotransferase subunit A (496 aa).

Active-site charge relay system residues include lysine 75 and serine 150. The active-site Acyl-ester intermediate is serine 174.

It belongs to the amidase family. GatA subfamily. As to quaternary structure, heterotrimer of A, B and C subunits.

The enzyme catalyses L-glutamyl-tRNA(Gln) + L-glutamine + ATP + H2O = L-glutaminyl-tRNA(Gln) + L-glutamate + ADP + phosphate + H(+). In terms of biological role, allows the formation of correctly charged Gln-tRNA(Gln) through the transamidation of misacylated Glu-tRNA(Gln) in organisms which lack glutaminyl-tRNA synthetase. The reaction takes place in the presence of glutamine and ATP through an activated gamma-phospho-Glu-tRNA(Gln). The chain is Glutamyl-tRNA(Gln) amidotransferase subunit A from Burkholderia pseudomallei (strain 1106a).